Consider the following 831-residue polypeptide: Cadherin-related family member 5 (831 aa).

The N-terminal stretch at 1–28 (MGAPALLWPSLLLPWLTVLFGQPPGTLA) is a signal peptide. The Extracellular segment spans residues 29–641 (QTQVCSVNQT…GQRFSTVDMA (613 aa)). 11 N-linked (GlcNAc...) asparagine glycosylation sites follow: Asn-36, Asn-45, Asn-84, Asn-135, Asn-143, Asn-173, Asn-201, Asn-287, Asn-311, Asn-408, and Asn-475. 4 Cadherin domains span residues 53–125 (VNIF…DNAP), 128–240 (SFEI…TPWF), 252–357 (IHAQ…PLQF), and 358–459 (SQSL…ERER). Positions 452–632 (IQVSERERTP…STGAGEQGDG (181 aa)) are disordered. A compositionally biased stretch (polar residues) spans 473 to 491 (SSNTTMEAPLTSGTSQRPA). Over residues 505–540 (GGTTLRPPTPASSIPGGSPTLGTSTSPQTTTPGGDS) the composition is skewed to low complexity. Polar residues predominate over residues 541–554 (AQTPKPGTSHPTAP). Repeat copies occupy residues 541-571 (AQTP…RSDS) and 572-602 (TQTP…SGSS). The tract at residues 541 to 614 (AQTPKPGTSH…TPKPGTSQST (74 aa)) is 3 X 31 AA approximate tandem repeats. Residues 555 to 572 (TSRTSTSLMTTSSRSDST) show a composition bias toward low complexity. Composition is skewed to polar residues over residues 573–582 (QTPKPGTSQP) and 589–623 (ASTS…SLPS). Residues 605-614 (TPKPGTSQST) form a 3; truncated repeat. Residues 642-662 (VLGGVLGALLLLALICLVILV) traverse the membrane as a helical segment. Residues 663-831 (HKHYRHRLAC…FGVDADNTYI (169 aa)) lie on the Cytoplasmic side of the membrane. Residues 663 to 831 (HKHYRHRLAC…FGVDADNTYI (169 aa)) are mediates interaction with USH1C and MYO7B and is required for proper localization to microvilli tips and function in microvilli organization. Disordered stretches follow at residues 675–774 (GKAS…GGYK) and 793–831 (EPTA…NTYI). Residues Ser-699, Ser-721, and Ser-725 each carry the phosphoserine modification. The segment covering 716 to 738 (PLRPPSPMSSSPTPPSSTPPSPQ) has biased composition (pro residues). Thr-728 carries the post-translational modification Phosphothreonine. A phosphoserine mark is found at Ser-736 and Ser-753. Over residues 761 to 771 (LTKERRPEGEG) the composition is skewed to basic and acidic residues. A Phosphothreonine modification is found at Thr-795. Over residues 797-807 (DVDSASASGSE) the composition is skewed to low complexity. A phosphoserine mark is found at Ser-802, Ser-804, and Ser-806.

Part of the IMAC/intermicrovillar adhesion complex/intermicrovillar tip-link complex composed of ANKS4B, MYO7B, USH1C, CDHR2 and CDHR5. Interacts (via cytoplasmic domain) with USH1C and MYO7B; required for proper localization of CDHR5 to microvilli tips and its function in brush border differentiation. N- and O-glycosylated.

It is found in the apical cell membrane. The protein localises to the cell projection. It localises to the microvillus membrane. Its function is as follows. Intermicrovillar adhesion molecule that forms, via its extracellular domain, calcium-dependent heterophilic complexes with CDHR2 on adjacent microvilli. Thereby, controls the packing of microvilli at the apical membrane of epithelial cells. Through its cytoplasmic domain, interacts with microvillus cytoplasmic proteins to form the intermicrovillar adhesion complex/IMAC. This complex plays a central role in microvilli and epithelial brush border differentiation. The polypeptide is Cadherin-related family member 5 (Mus musculus (Mouse)).